Reading from the N-terminus, the 407-residue chain is Argininosuccinate synthase (407 aa).

ATP is bound by residues 11–19 (AYSGGLDTS) and Ala38. Positions 91 and 96 each coordinate L-citrulline. Gly121 is a binding site for ATP. Residues Thr123, Asn127, and Asp128 each coordinate L-aspartate. Asn127 lines the L-citrulline pocket. L-citrulline contacts are provided by Arg131, Ser181, Ser190, Glu266, and Tyr278.

Belongs to the argininosuccinate synthase family. Type 1 subfamily. Homotetramer.

Its subcellular location is the cytoplasm. The enzyme catalyses L-citrulline + L-aspartate + ATP = 2-(N(omega)-L-arginino)succinate + AMP + diphosphate + H(+). Its pathway is amino-acid biosynthesis; L-arginine biosynthesis; L-arginine from L-ornithine and carbamoyl phosphate: step 2/3. The protein is Argininosuccinate synthase of Campylobacter concisus (strain 13826).